The following is a 1194-amino-acid chain: ATP-dependent RNA helicase DHX30 (1194 aa).

A compositionally biased stretch (basic and acidic residues) spans 1 to 10 (MFSLDSFRKD). The tract at residues 1 to 27 (MFSLDSFRKDRAQHRQRQCKLPPPRLP) is disordered. Ser-6 is subject to Phosphoserine. One can recognise a DRBM domain in the interval 53 to 121 (PKNLLNSVIG…QAAAAACQLF (69 aa)). Residues 150–199 (ADSWWRPEPTMPPTSWRQLNPESIRPGGPGGLSRSLGREEEEDEEEELEE) are disordered. A compositionally biased stretch (acidic residues) spans 188 to 199 (EEEEDEEEELEE). Phosphoserine is present on residues Ser-226 and Ser-380. The 169-residue stretch at 444–612 (LNAIEQHPVV…FGGCPVIKVP (169 aa)) folds into the Helicase ATP-binding domain. 457-464 (GDTGCGKT) contributes to the ATP binding site. Positions 559-562 (DEVH) match the DEAH box motif. Residues 654–827 (LVTDLVLHID…NLVLQAKIHM (174 aa)) enclose the Helicase C-terminal domain.

The protein belongs to the DEAD box helicase family. DEAH subfamily. As to quaternary structure, identified in a complex with TFAM and SSBP1. Interacts (via N-terminus) with ZC3HAV1 (via N-terminal domain) in an RNA-independent manner. Found in a complex with GRSF1, DDX28, FASTKD2 and FASTKD5.

It is found in the cytoplasm. It localises to the mitochondrion. The protein resides in the mitochondrion matrix. Its subcellular location is the mitochondrion nucleoid. The catalysed reaction is ATP + H2O = ADP + phosphate + H(+). RNA-dependent helicase. Plays an important role in the assembly of the mitochondrial large ribosomal subunit. Required for optimal function of the zinc-finger antiviral protein ZC3HAV1. Associates with mitochondrial DNA. Involved in nervous system development and differentiation through its involvement in the up-regulation of a number of genes which are required for neurogenesis, including GSC, NCAM1, neurogenin, and NEUROD. This is ATP-dependent RNA helicase DHX30 (DHX30) from Pongo abelii (Sumatran orangutan).